Consider the following 60-residue polypeptide: Large ribosomal subunit protein uL30 (60 aa).

Belongs to the universal ribosomal protein uL30 family. In terms of assembly, part of the 50S ribosomal subunit.

This Desulforapulum autotrophicum (strain ATCC 43914 / DSM 3382 / VKM B-1955 / HRM2) (Desulfobacterium autotrophicum) protein is Large ribosomal subunit protein uL30.